Consider the following 377-residue polypeptide: Probable isocitrate dehydrogenase [NAD] subunit alpha, mitochondrial (377 aa).

The substrate site is built by R131, R141, R162, and D249. The Mg(2+) site is built by D249, D273, and D277.

Belongs to the isocitrate and isopropylmalate dehydrogenases family. In terms of assembly, heterooligomer of subunits alpha, beta, and gamma in the apparent ratio of 2:1:1. The cofactor is Mg(2+). Mn(2+) is required as a cofactor.

Its subcellular location is the mitochondrion. The catalysed reaction is D-threo-isocitrate + NAD(+) = 2-oxoglutarate + CO2 + NADH. In terms of biological role, probable catalytic subunit of the enzyme which catalyzes the decarboxylation of isocitrate (ICT) into alpha-ketoglutarate. In Drosophila melanogaster (Fruit fly), this protein is Probable isocitrate dehydrogenase [NAD] subunit alpha, mitochondrial.